We begin with the raw amino-acid sequence, 256 residues long: Ubiquinone/menaquinone biosynthesis C-methyltransferase UbiE (256 aa).

Over residues Met1–Pro12 the composition is skewed to basic and acidic residues. Positions Met1–Pro22 are disordered. S-adenosyl-L-methionine contacts are provided by residues Thr79, Asp100, and Asp128–Ala129.

The protein belongs to the class I-like SAM-binding methyltransferase superfamily. MenG/UbiE family.

The catalysed reaction is a 2-demethylmenaquinol + S-adenosyl-L-methionine = a menaquinol + S-adenosyl-L-homocysteine + H(+). It carries out the reaction a 2-methoxy-6-(all-trans-polyprenyl)benzene-1,4-diol + S-adenosyl-L-methionine = a 5-methoxy-2-methyl-3-(all-trans-polyprenyl)benzene-1,4-diol + S-adenosyl-L-homocysteine + H(+). It participates in quinol/quinone metabolism; menaquinone biosynthesis; menaquinol from 1,4-dihydroxy-2-naphthoate: step 2/2. The protein operates within cofactor biosynthesis; ubiquinone biosynthesis. In terms of biological role, methyltransferase required for the conversion of demethylmenaquinol (DMKH2) to menaquinol (MKH2) and the conversion of 2-polyprenyl-6-methoxy-1,4-benzoquinol (DDMQH2) to 2-polyprenyl-3-methyl-6-methoxy-1,4-benzoquinol (DMQH2). The protein is Ubiquinone/menaquinone biosynthesis C-methyltransferase UbiE of Pseudomonas putida (Arthrobacter siderocapsulatus).